A 213-amino-acid polypeptide reads, in one-letter code: Putative protein Brevis radix-like 3 (213 aa).

The segment at 7–27 (CSSKEGGEDGSRGAATPHGRD) is disordered. The BRX domain occupies 158 to 213 (REWTAQVEPGVQITFVTLPGGGNDLKRIRFSRERFGEDRAKVWWEHNRDRIQAQYL).

The protein belongs to the BRX family.

It is found in the nucleus. This chain is Putative protein Brevis radix-like 3 (BRXL3), found in Oryza sativa subsp. japonica (Rice).